The following is a 935-amino-acid chain: Protein translocase subunit SecA (935 aa).

Residues Gln90, 108–112 (GEGKT), and Asp504 each bind ATP.

Belongs to the SecA family. As to quaternary structure, monomer and homodimer. Part of the essential Sec protein translocation apparatus which comprises SecA, SecYEG and auxiliary proteins SecDF. Other proteins may also be involved.

The protein localises to the cell inner membrane. The protein resides in the cellular thylakoid membrane. It is found in the cytoplasm. It catalyses the reaction ATP + H2O + cellular proteinSide 1 = ADP + phosphate + cellular proteinSide 2.. Functionally, part of the Sec protein translocase complex. Interacts with the SecYEG preprotein conducting channel. Has a central role in coupling the hydrolysis of ATP to the transfer of proteins into and across the cell membrane, serving as an ATP-driven molecular motor driving the stepwise translocation of polypeptide chains across the membrane. Probably participates in protein translocation into and across both the cytoplasmic and thylakoid membranes in cyanobacterial cells. This Gloeothece citriformis (strain PCC 7424) (Cyanothece sp. (strain PCC 7424)) protein is Protein translocase subunit SecA.